The sequence spans 341 residues: MIDQSKLIERWKTTFETAQNPTELLAFKNSFRNADLKPLLSQIKETTDIETKRHLGQLYKQLESTLQTLHDTQLQVFTQAQSSSVLTHGDVMLLATSFAPGSSNIIYQVIDELVNYFKKFLFTVNYDSELTTIADCFDLLNIPKDHPSRNLTDTFYLDKNRLLRTHCTAATLRAVKETKKSNNPDIRIASFGAVFRKDDDDATHSHQFNQLDFMWIKKDFSLTNLKWFMQNMINHIFGENTSARFRLSHFPFTEPSFEIDIRCWLCQNGCGVCKKTRWIEVLGAGILHPQVMANMGFSDTDNIRGIAAGIGIERLVMLKHGISDIRDLYDNNFKFLAQFTD.

Glutamate 254 provides a ligand contact to Mg(2+).

It belongs to the class-II aminoacyl-tRNA synthetase family. Phe-tRNA synthetase alpha subunit type 1 subfamily. Tetramer of two alpha and two beta subunits. It depends on Mg(2+) as a cofactor.

The protein localises to the cytoplasm. It catalyses the reaction tRNA(Phe) + L-phenylalanine + ATP = L-phenylalanyl-tRNA(Phe) + AMP + diphosphate + H(+). This Mycoplasma pneumoniae (strain ATCC 29342 / M129 / Subtype 1) (Mycoplasmoides pneumoniae) protein is Phenylalanine--tRNA ligase alpha subunit (pheS).